A 308-amino-acid polypeptide reads, in one-letter code: Elongation factor Ts (308 aa).

Residues 80-83 (TDFV) form an involved in Mg(2+) ion dislocation from EF-Tu region.

The protein belongs to the EF-Ts family.

Its subcellular location is the cytoplasm. Associates with the EF-Tu.GDP complex and induces the exchange of GDP to GTP. It remains bound to the aminoacyl-tRNA.EF-Tu.GTP complex up to the GTP hydrolysis stage on the ribosome. This chain is Elongation factor Ts, found in Erythrobacter litoralis (strain HTCC2594).